Here is a 286-residue protein sequence, read N- to C-terminus: Aldo-keto reductase MAV_4483 (286 aa).

The active-site Proton donor is tyrosine 61. NADPH-binding residues include leucine 201, valine 203, valine 239, arginine 241, serine 242, arginine 247, and asparagine 251.

The protein belongs to the aldo/keto reductase family.

The chain is Aldo-keto reductase MAV_4483 from Mycobacterium avium (strain 104).